Here is a 318-residue protein sequence, read N- to C-terminus: Thymidylate synthase (318 aa).

Residues Arg-25 and 180-181 contribute to the dUMP site; that span reads RR. Cys-200 (nucleophile) is an active-site residue. DUMP is bound by residues 220–223, Asn-231, and 261–263; these read RSAD and HIY. Asp-223 serves as a coordination point for (6R)-5,10-methylene-5,6,7,8-tetrahydrofolate. Ala-317 contributes to the (6R)-5,10-methylene-5,6,7,8-tetrahydrofolate binding site.

Belongs to the thymidylate synthase family. Bacterial-type ThyA subfamily. As to quaternary structure, homodimer.

It is found in the cytoplasm. It catalyses the reaction dUMP + (6R)-5,10-methylene-5,6,7,8-tetrahydrofolate = 7,8-dihydrofolate + dTMP. The protein operates within pyrimidine metabolism; dTTP biosynthesis. Catalyzes the reductive methylation of 2'-deoxyuridine-5'-monophosphate (dUMP) to 2'-deoxythymidine-5'-monophosphate (dTMP) while utilizing 5,10-methylenetetrahydrofolate (mTHF) as the methyl donor and reductant in the reaction, yielding dihydrofolate (DHF) as a by-product. This enzymatic reaction provides an intracellular de novo source of dTMP, an essential precursor for DNA biosynthesis. The chain is Thymidylate synthase from Ligilactobacillus salivarius (strain UCC118) (Lactobacillus salivarius).